A 305-amino-acid chain; its full sequence is Large ribosomal subunit protein uL2m (305 aa).

Residues 1-60 (MALCALTRALRSLNLAPPTVAAPAPSLFPAAQMMNNGLLQQPSALMLLPCRPVLTSVALN) constitute a mitochondrion transit peptide. A disordered region spans residues 264–283 (RWLGKRPNSGRWHRKGGWAG). Residues 274 to 283 (RWHRKGGWAG) show a composition bias toward basic residues.

This sequence belongs to the universal ribosomal protein uL2 family. As to quaternary structure, component of the mitochondrial large ribosomal subunit (mt-LSU). Mature mammalian 55S mitochondrial ribosomes consist of a small (28S) and a large (39S) subunit. The 28S small subunit contains a 12S ribosomal RNA (12S mt-rRNA) and 30 different proteins. The 39S large subunit contains a 16S rRNA (16S mt-rRNA), a copy of mitochondrial valine transfer RNA (mt-tRNA(Val)), which plays an integral structural role, and 52 different proteins.

The protein localises to the mitochondrion. The chain is Large ribosomal subunit protein uL2m (MRPL2) from Homo sapiens (Human).